The following is a 562-amino-acid chain: MNMLYFVLALLVGLAGGFFVGQARGRQQRATLDDQLQREARAEAERIRTQADAEARQLREQAEQRLQDAARRLQEADDRERQVTLQLEAQREQLQAVRAQIEAERARAAQDAARERETLSADRQETRREREELKREIERLNRRAEQLDARGDKLDALEERLEGQLHALAQQEAELAERSRQVDLKLYEVAGLTPEAAREQILRQLDAELEEEKAIRVKAMTERATAEARRTARNVIAQAIQRSASETSSQMSVSVVPIPNDAMKGRLIGREGRNIRAFEALTGVDLIIDDTPEAVILSSFNPVRREVARHVLEALVADGRIHPTRIEEMVHKAQDEMKSFIHAQGEEAAIESGVVGLKPGLVQLLGRMYFRSSYGQNVLKHSVQVAHLTGIMADELGLDAALARRAGLMHDIGKSIDREIEGTHVEIGINLAKRFGEPPEVIDAIAHHHDPENGETLYSVLVAAADAISAARPGARREELEAYVRRLEQLEQIAIAFPGVQQAYAIQAGREVRVLVQPEKVTDAQATLLAREIAGRIEQDMEYPGQVQVTVVRESRAVEVAR.

Residues 1–21 form a helical membrane-spanning segment; sequence MNMLYFVLALLVGLAGGFFVG. Positions 108–129 are disordered; the sequence is AAQDAARERETLSADRQETRRE. Positions 252–312 constitute a KH domain; sequence SVSVVPIPND…VRREVARHVL (61 aa). The 94-residue stretch at 378–471 folds into the HD domain; the sequence is VLKHSVQVAH…VAAADAISAA (94 aa).

Belongs to the RNase Y family.

The protein resides in the cell membrane. Functionally, endoribonuclease that initiates mRNA decay. This chain is Ribonuclease Y, found in Deinococcus geothermalis (strain DSM 11300 / CIP 105573 / AG-3a).